The chain runs to 396 residues: 1-deoxy-D-xylulose 5-phosphate reductoisomerase (396 aa).

NADPH-binding residues include threonine 14, glycine 15, serine 16, isoleucine 17, glycine 40, and asparagine 128. A 1-deoxy-D-xylulose 5-phosphate-binding site is contributed by lysine 129. Glutamate 130 lines the NADPH pocket. Aspartate 154 contributes to the Mn(2+) binding site. 1-deoxy-D-xylulose 5-phosphate-binding residues include serine 155, glutamate 156, serine 180, and histidine 203. Mn(2+) is bound at residue glutamate 156. Residue glycine 209 participates in NADPH binding. Serine 216, asparagine 221, lysine 222, and glutamate 225 together coordinate 1-deoxy-D-xylulose 5-phosphate. Mn(2+) is bound at residue glutamate 225.

The protein belongs to the DXR family. The cofactor is Mg(2+). Mn(2+) serves as cofactor.

It carries out the reaction 2-C-methyl-D-erythritol 4-phosphate + NADP(+) = 1-deoxy-D-xylulose 5-phosphate + NADPH + H(+). It functions in the pathway isoprenoid biosynthesis; isopentenyl diphosphate biosynthesis via DXP pathway; isopentenyl diphosphate from 1-deoxy-D-xylulose 5-phosphate: step 1/6. Catalyzes the NADPH-dependent rearrangement and reduction of 1-deoxy-D-xylulose-5-phosphate (DXP) to 2-C-methyl-D-erythritol 4-phosphate (MEP). The protein is 1-deoxy-D-xylulose 5-phosphate reductoisomerase of Xylella fastidiosa (strain 9a5c).